A 277-amino-acid chain; its full sequence is NH(3)-dependent NAD(+) synthetase (277 aa).

36-43 contributes to the ATP binding site; it reads GLSGGIDS. Asp42 serves as a coordination point for Mg(2+). Arg118 contributes to the deamido-NAD(+) binding site. ATP is bound at residue Thr138. Glu143 lines the Mg(2+) pocket. Residues Lys167 and Ser189 each coordinate ATP.

It belongs to the NAD synthetase family. As to quaternary structure, homodimer.

The enzyme catalyses deamido-NAD(+) + NH4(+) + ATP = AMP + diphosphate + NAD(+) + H(+). The protein operates within cofactor biosynthesis; NAD(+) biosynthesis; NAD(+) from deamido-NAD(+) (ammonia route): step 1/1. Functionally, catalyzes the ATP-dependent amidation of deamido-NAD to form NAD. Uses ammonia as a nitrogen source. The polypeptide is NH(3)-dependent NAD(+) synthetase (Chlorobium phaeovibrioides (strain DSM 265 / 1930) (Prosthecochloris vibrioformis (strain DSM 265))).